Reading from the N-terminus, the 245-residue chain is Phycocyanobilin:ferredoxin oxidoreductase (245 aa).

The protein belongs to the HY2 family.

The enzyme catalyses (2R,3Z)-phycocyanobilin + 4 oxidized [2Fe-2S]-[ferredoxin] = biliverdin IXalpha + 4 reduced [2Fe-2S]-[ferredoxin] + 4 H(+). Catalyzes the four-electron reduction of biliverdin IX-alpha (2-electron reduction at both the A and D rings); the reaction proceeds via an isolatable 2-electron intermediate, 181,182-dihydrobiliverdin. This Gloeothece citriformis (strain PCC 7424) (Cyanothece sp. (strain PCC 7424)) protein is Phycocyanobilin:ferredoxin oxidoreductase.